A 128-amino-acid chain; its full sequence is uncharacterized protein (128 aa).

The stretch at 95–123 forms a coiled coil; that stretch reads IIDFATAKRELDRLTEEIATLKGELAQDK.

The protein resides in the cellular thylakoid membrane. This is an uncharacterized protein from Synechocystis sp. (strain ATCC 27184 / PCC 6803 / Kazusa).